Consider the following 144-residue polypeptide: Large ribosomal subunit protein uL15 (144 aa).

The span at 1–14 shows a compositional bias: basic residues; the sequence is MVVRREKKSRKMRG. Residues 1–35 form a disordered region; sequence MVVRREKKSRKMRGSRTMGWGIRGQHRDRGSQGGR.

The protein belongs to the universal ribosomal protein uL15 family. Part of the 50S ribosomal subunit.

Functionally, binds to the 23S rRNA. In Saccharolobus solfataricus (strain ATCC 35092 / DSM 1617 / JCM 11322 / P2) (Sulfolobus solfataricus), this protein is Large ribosomal subunit protein uL15.